Here is a 140-residue protein sequence, read N- to C-terminus: Small ribosomal subunit protein uS12m (140 aa).

Belongs to the universal ribosomal protein uS12 family.

It is found in the mitochondrion. The chain is Small ribosomal subunit protein uS12m (mrps12) from Dictyostelium citrinum (Slime mold).